Reading from the N-terminus, the 322-residue chain is CRISPR-associated endonuclease Cas1 (322 aa).

Residues glutamate 149, histidine 214, and glutamate 229 each contribute to the Mn(2+) site.

The protein belongs to the CRISPR-associated endonuclease Cas1 family. Homodimer, forms a heterotetramer with a Cas2 homodimer. Mg(2+) serves as cofactor. Requires Mn(2+) as cofactor.

In terms of biological role, CRISPR (clustered regularly interspaced short palindromic repeat), is an adaptive immune system that provides protection against mobile genetic elements (viruses, transposable elements and conjugative plasmids). CRISPR clusters contain spacers, sequences complementary to antecedent mobile elements, and target invading nucleic acids. CRISPR clusters are transcribed and processed into CRISPR RNA (crRNA). Acts as a dsDNA endonuclease. Involved in the integration of spacer DNA into the CRISPR cassette. The sequence is that of CRISPR-associated endonuclease Cas1 from Methanocaldococcus jannaschii (strain ATCC 43067 / DSM 2661 / JAL-1 / JCM 10045 / NBRC 100440) (Methanococcus jannaschii).